A 305-amino-acid chain; its full sequence is N-acetylmuramic acid 6-phosphate etherase (305 aa).

Residues 61–224 (ISDALAKGGR…STGAMVKLGK (164 aa)) enclose the SIS domain. The active-site Proton donor is Glu-89. Glu-120 is a catalytic residue.

It belongs to the GCKR-like family. MurNAc-6-P etherase subfamily. Homodimer.

The enzyme catalyses N-acetyl-D-muramate 6-phosphate + H2O = N-acetyl-D-glucosamine 6-phosphate + (R)-lactate. Its pathway is amino-sugar metabolism; N-acetylmuramate degradation. Its function is as follows. Specifically catalyzes the cleavage of the D-lactyl ether substituent of MurNAc 6-phosphate, producing GlcNAc 6-phosphate and D-lactate. The sequence is that of N-acetylmuramic acid 6-phosphate etherase from Synechocystis sp. (strain ATCC 27184 / PCC 6803 / Kazusa).